The chain runs to 245 residues: MRKIRLTIEYDGTNYHGWQIQKNAKTVQEVIQKALSKLLGEDVGVTGCSRTDVGVHAYGQVAHFLTDSKIPGDKFSYAINNLLPDDIVIKNSEEVPEEFHARYSAKGKKYRYLIYNSPHASAIMRNRSCHVRPELNVAEMQKAAGYFKGEHDFLAFQATGGQVRSTVREIYGMEVYVKEDNMISIEVSGNGFLYNMVRIIAGTLIYVGMGKLHESEIPGIIAGLDRTKAGKTAPAQGLYLVQIYY.

Aspartate 52 (nucleophile) is an active-site residue. Tyrosine 110 is a binding site for substrate.

The protein belongs to the tRNA pseudouridine synthase TruA family. As to quaternary structure, homodimer.

The catalysed reaction is uridine(38/39/40) in tRNA = pseudouridine(38/39/40) in tRNA. Its function is as follows. Formation of pseudouridine at positions 38, 39 and 40 in the anticodon stem and loop of transfer RNAs. The sequence is that of tRNA pseudouridine synthase A from Ruminiclostridium cellulolyticum (strain ATCC 35319 / DSM 5812 / JCM 6584 / H10) (Clostridium cellulolyticum).